A 90-amino-acid chain; its full sequence is DNA-binding protein HU-alpha (90 aa).

It belongs to the bacterial histone-like protein family. As to quaternary structure, heterodimer of an alpha and a beta chain.

Functionally, histone-like DNA-binding protein which is capable of wrapping DNA to stabilize it, and thus to prevent its denaturation under extreme environmental conditions. The chain is DNA-binding protein HU-alpha (hupA) from Escherichia coli O157:H7.